The primary structure comprises 406 residues: Flavohemoprotein (406 aa).

Residues 6-144 (VLLDKKTTEI…IADIFISVEK (139 aa)) enclose the Globin domain. A heme b-binding site is contributed by histidine 91. Catalysis depends on charge relay system residues tyrosine 101 and glutamate 143. The interval 155 to 406 (GGWTGFRDFK…LFGPLEPIAK (252 aa)) is reductase. Residues 158 to 267 (TGFRDFKVIK…SAPAGDFILD (110 aa)) enclose the FAD-binding FR-type domain. FAD-binding positions include tyrosine 196 and 212 to 215 (RQYS). 280 to 285 (GVGLTP) contacts NADP(+). 397-400 (LFGP) provides a ligand contact to FAD.

It belongs to the globin family. Two-domain flavohemoproteins subfamily. This sequence in the C-terminal section; belongs to the flavoprotein pyridine nucleotide cytochrome reductase family. Heme b is required as a cofactor. The cofactor is FAD.

It catalyses the reaction 2 nitric oxide + NADPH + 2 O2 = 2 nitrate + NADP(+) + H(+). It carries out the reaction 2 nitric oxide + NADH + 2 O2 = 2 nitrate + NAD(+) + H(+). Is involved in NO detoxification in an aerobic process, termed nitric oxide dioxygenase (NOD) reaction that utilizes O(2) and NAD(P)H to convert NO to nitrate, which protects the bacterium from various noxious nitrogen compounds. Therefore, plays a central role in the inducible response to nitrosative stress. This chain is Flavohemoprotein, found in Oceanobacillus iheyensis (strain DSM 14371 / CIP 107618 / JCM 11309 / KCTC 3954 / HTE831).